The chain runs to 208 residues: Protein JLP2 (208 aa).

The segment covering 185–194 has biased composition (basic residues); it reads AKKNQKKKNK. The disordered stretch occupies residues 185 to 208; the sequence is AKKNQKKKNKQSKDEVTDDMQLEV.

This sequence belongs to the CCDC25 family.

It localises to the cytoplasm. This is Protein JLP2 (JLP2) from Saccharomyces cerevisiae (strain ATCC 204508 / S288c) (Baker's yeast).